The chain runs to 137 residues: MRTVGVFLATCLVTIFVLPTWGNWAYPCCHVTQLRAQHLLALENISDIYLVSNQTCDGFSLASLNSPKNGSNQLVISRCANGLNVVSFFISILKRSSSALTGHLRELLTTLETLYGSFSVEDLFGANLNRYAWHRGG.

Residues 1-25 form the signal peptide; it reads MRTVGVFLATCLVTIFVLPTWGNWA. Residues 23–128 form an interaction with gH region; sequence NWAYPCCHVT…SVEDLFGANL (106 aa). Cystine bridges form between C28–C56 and C29–C79.

The protein belongs to the herpesviridae glycoprotein L family. As to quaternary structure, interacts with glycoprotein H (gH); this interaction is necessary for the correct processing and cell surface expression of gH. The heterodimer gH/gL seems to interact with gB trimers during fusion. The heterodimer gH/gL interacts with host EPHA2 to facilitate virus internalization and fusion.

It localises to the virion membrane. The protein resides in the host cell membrane. The protein localises to the host Golgi apparatus. It is found in the host trans-Golgi network. The heterodimer glycoprotein H-glycoprotein L is required for the fusion of viral and plasma membranes leading to virus entry into the host cell. Acts as a functional inhibitor of gH and maintains gH in an inhibited form. Upon binding to host integrins, gL dissociates from gH leading to activation of the viral fusion glycoproteins gB and gH. The heterodimer gH/gL targets also host EPHA2 to promote viral entry. This Epstein-Barr virus (strain AG876) (HHV-4) protein is Envelope glycoprotein L.